The following is a 398-amino-acid chain: Alpha-ketoglutarate-dependent dioxygenase bsc9 (398 aa).

Residues His-167 and Asp-169 each contribute to the Fe cation site. Thr-212 is a 2-oxoglutarate binding site. His-365 contacts Fe cation. Residue Arg-377 coordinates 2-oxoglutarate.

The protein belongs to the TfdA dioxygenase family. The cofactor is Fe(2+).

It functions in the pathway mycotoxin biosynthesis. Alpha-ketoglutarate dependent dioxygenase; part of the gene cluster that mediates the biosynthesis of the diterpene glucoside brassicicene C. In the first step of the brassicicene C biosynthesis, the bifunctional diterpene synthase bsc8 that possesses both prenyl transferase and terpene cyclase activity, converts isopentenyl diphosphate and dimethylallyl diphosphate into geranylgeranyl diphosphate (GGDP) that is further converted into fusicocca-2,10(14)-diene, the first precursor for brassicicene C. Fusicocca-2,10(14)-diene is then substrate of cytochrome P450 monooxygenase bsc1 for hydroxylation at the C-8 position. Oxidation at C-16 position to aldehyde is then catalyzed by the cytochrome P450 monooyxygenase bsc7, yielding fusicocca-2,10(14)-diene-8-beta,16-diol. Follows the isomerization of the double bond and reduction of aldehyde to alcohol catalyzed by the short-chain dehydrogenase/reductase bsc3 to yield the diol compound fusicocca-1,10(14)-diene-8 beta,16-diol. The next step is the oxidation at the C-3 position of fusicocca-2,10(14)-diene-8-beta,16-diol catalyzed by the alpha-ketoglutarate dependent dioxygenase bsc9, to produce a triol compound. Methylation of the hydroxy group at position 16 is performed by the methyltransferase bsc6. 16-O-methylation is followed by oxidation at the C-13 position to ketone and an alkyl shift of the methyl group leads to brassicicene C. Although the probable acetyltransferase bsc4 is included in the gene cluster, no acetylation reactions are necessary for brassicicene C biosynthesis. However, the fact that brassicicene E, which is a structurally related compound having an acetoxy group at position 12, was previously isolated from another strain of A.brassicicola suggests that the ATCC 96836 strain might also produce a small amount of brassicicene E. The polypeptide is Alpha-ketoglutarate-dependent dioxygenase bsc9 (Alternaria brassicicola (Dark leaf spot agent)).